Reading from the N-terminus, the 399-residue chain is Dual-specificity RNA methyltransferase RlmN (399 aa).

Glu-122 functions as the Proton acceptor in the catalytic mechanism. Positions 128–371 (ETDRGTLCVS…VRTPRGRDIL (244 aa)) constitute a Radical SAM core domain. A disulfide bridge connects residues Cys-135 and Cys-374. The [4Fe-4S] cluster site is built by Cys-142, Cys-146, and Cys-149. S-adenosyl-L-methionine contacts are provided by residues 200-201 (GE), Ser-232, 254-256 (SLH), and Asn-331. Catalysis depends on Cys-374, which acts as the S-methylcysteine intermediate.

The protein belongs to the radical SAM superfamily. RlmN family. [4Fe-4S] cluster serves as cofactor.

Its subcellular location is the cytoplasm. The catalysed reaction is adenosine(2503) in 23S rRNA + 2 reduced [2Fe-2S]-[ferredoxin] + 2 S-adenosyl-L-methionine = 2-methyladenosine(2503) in 23S rRNA + 5'-deoxyadenosine + L-methionine + 2 oxidized [2Fe-2S]-[ferredoxin] + S-adenosyl-L-homocysteine. The enzyme catalyses adenosine(37) in tRNA + 2 reduced [2Fe-2S]-[ferredoxin] + 2 S-adenosyl-L-methionine = 2-methyladenosine(37) in tRNA + 5'-deoxyadenosine + L-methionine + 2 oxidized [2Fe-2S]-[ferredoxin] + S-adenosyl-L-homocysteine. Specifically methylates position 2 of adenine 2503 in 23S rRNA and position 2 of adenine 37 in tRNAs. m2A2503 modification seems to play a crucial role in the proofreading step occurring at the peptidyl transferase center and thus would serve to optimize ribosomal fidelity. This is Dual-specificity RNA methyltransferase RlmN from Rhodopseudomonas palustris (strain HaA2).